A 129-amino-acid chain; its full sequence is MGRIFTVELEGRSYRCRFCRTHLALPDDLVSRSFHCRRGKAYLFNRSVNISMGPLEERLMLSGMHTVADIFCCCCGQNVGWKYESAHEKAQKYKEGKFVLERGRIVDEIDLSTEVYIDTHGSTSDTEDS.

The region spanning 12–109 (RSYRCRFCRT…LERGRIVDEI (98 aa)) is the Yippee domain. Zn(2+) contacts are provided by Cys16, Cys19, Cys72, and Cys75.

It belongs to the yippee family.

The sequence is that of Protein yippee-like At5g53940 from Arabidopsis thaliana (Mouse-ear cress).